A 370-amino-acid chain; its full sequence is MKTKLILLYGGKSAEHEVSLQTAFSVINALDLEKFEAEPIYITNEGEWVQGPLLSGKLDFVEQLRFSATDRVKLATAESEKSEGEAISPAVLEADGQETVVFPLLHGPNGEDGTVQGLFEVLNIPYVGNGVLASSAAMDKIVMKKIFADAGIPQVPAVAVRLIDWKNYQEEMVTEMEEVLTYPVFVKPANLGSSVGISKATNKTELIEAMTEAFLYDRRVVVEQGVVAREIEMGVLGNDTPVCSVPGEILPEGAVAKFYDYKAKYQDNNTALIIPTEVEPEILEQMKEYAVQAFLGLDASGLVRADFFLTEDNQLFLNEVNTMPGFTPYSMYPLLWQETGLPYGALIERLVDLAKERHAAKNALKYKLED.

The 209-residue stretch at K144–D352 folds into the ATP-grasp domain. Residue E177–E232 participates in ATP binding. Residues D306, E319, and N321 each coordinate Mg(2+).

Belongs to the D-alanine--D-alanine ligase family. Mg(2+) is required as a cofactor. Requires Mn(2+) as cofactor.

It is found in the cytoplasm. The enzyme catalyses 2 D-alanine + ATP = D-alanyl-D-alanine + ADP + phosphate + H(+). Its pathway is cell wall biogenesis; peptidoglycan biosynthesis. Its function is as follows. Cell wall formation. The protein is D-alanine--D-alanine ligase of Listeria innocua serovar 6a (strain ATCC BAA-680 / CLIP 11262).